Consider the following 803-residue polypeptide: Ras GTPase-activating protein 4B (803 aa).

2 consecutive C2 domains span residues 1 to 105 (MAKR…SGWA) and 116 to 232 (VQGE…EGWF). Ca(2+) contacts are provided by aspartate 21, aspartate 27, aspartate 74, aspartate 76, serine 79, aspartate 82, aspartate 149, aspartate 155, aspartate 202, aspartate 204, serine 207, and aspartate 210. Residues 318–546 (GLAKDFLDLL…AQLKDFITKL (229 aa)) enclose the Ras-GAP domain. Residues 566 to 673 (PPVKEGPLFI…WLSALRKVSI (108 aa)) form the PH domain. A Btk-type zinc finger spans residues 675–711 (NTGLLGSYHPGVFRGDKWSCCHQKEKTGQGCDKTRSR). Zn(2+) contacts are provided by histidine 683, cysteine 694, cysteine 695, and cysteine 705. The segment at 781–803 (EAHSSSPAGSPPSEPNCLLELQT) is disordered.

The cofactor is Ca(2+).

It is found in the cytoplasm. Its subcellular location is the cytosol. The protein resides in the cell membrane. Functionally, ca(2+)-dependent Ras GTPase-activating protein, that may play a role in the Ras-MAPK pathway. This chain is Ras GTPase-activating protein 4B (RASA4B), found in Homo sapiens (Human).